An 815-amino-acid chain; its full sequence is Heme-copper oxidase subunit I+III (815 aa).

A COX1 region spans residues 1-467 (MVSRLRGFLA…QLSTLGAFIF (467 aa)). A helical transmembrane segment spans residues 26-46 (LLYLVTSIAFLLIAGSLALLF). H70 is a Fe(II)-heme a binding site. 18 helical membrane passes run 71 to 91 (GLIM…NYIV), 105 to 125 (LNAL…ASFF), 157 to 177 (LAIF…LVTI), 197 to 217 (ILFT…GGAL), 242 to 262 (LFWF…LGAM), 281 to 301 (LTAF…HMFI), 314 to 334 (ITTI…IFTL), 339 to 359 (LVYT…IIGG), 380 to 400 (VVAH…IAGL), 419 to 439 (IHFA…FALM), 463 to 483 (GAFI…YSLV), 580 to 600 (ALFG…VFLL), 637 to 657 (WVFI…YFFI), 683 to 703 (LINT…YLGV), 708 to 728 (YLIT…FLTV), 736 to 756 (LLIA…YVTT), 758 to 778 (AHAL…VKLF), and 791 to 811 (VLAV…VFPL). Residues H248, Y252, H297, and H298 each contribute to the Cu cation site. Residues 248–252 (HPEVY) constitute a cross-link (1'-histidyl-3'-tyrosine (His-Tyr)). H383 lines the heme a3 pocket. H385 lines the Fe(II)-heme a pocket. Residues 545–815 (DVSNVPLSGG…TLVFPLYYLV (271 aa)) form a COX3 region.

It in the N-terminal section; belongs to the heme-copper respiratory oxidase family. In the C-terminal section; belongs to the cytochrome c oxidase subunit 3 family. Requires heme as cofactor. The cofactor is Cu cation.

The protein localises to the cell membrane. This Aeropyrum pernix (strain ATCC 700893 / DSM 11879 / JCM 9820 / NBRC 100138 / K1) protein is Heme-copper oxidase subunit I+III (aoxB).